A 183-amino-acid polypeptide reads, in one-letter code: Inner membrane protein p54 (183 aa).

Residues 32–52 form a helical membrane-spanning segment; the sequence is YTILIAIVVLVIIIIVLIYLF. The tract at residues 81-157 is disordered; sequence EVTPQPGTSK…PYTTVTTQNT (77 aa). The span at 111–122 shows a compositional bias: polar residues; the sequence is RPATNKPVTDNP. A compositionally biased stretch (low complexity) spans 130–143; the sequence is ATGGPAAAPAAASA. An interaction with host DYNLL1 region spans residues 149-161; it reads YTTVTTQNTASQT.

Belongs to the asfivirus envelope protein p54 family. As to quaternary structure, interacts with the host light chain cytoplasmic dynein DYNLL1; this interaction is critical for intracellular microtubule-dependent virus transport toward viral factories.

The protein resides in the virion membrane. The protein localises to the host cytoplasm. It localises to the host cytoskeleton. It is found in the host endoplasmic reticulum membrane. Inner envelope protein involved, through its interaction with host dynein, in the intracellular microtubule-dependent transport of viral capsid toward viral factories. Seems to induce caspase-3 activation and apoptosis. Plays a role in virion morphogenesis by recruiting and transforming the host ER membranes into the precursors of the viral envelope. Involved in virus attachment to the host cell. This chain is Inner membrane protein p54, found in Ornithodoros (relapsing fever ticks).